Here is a 518-residue protein sequence, read N- to C-terminus: Protein nucleotidyltransferase YdiU (518 aa).

ATP is bound by residues Gly109, Gly111, Arg112, Lys131, Asp143, Gly144, Arg194, and Arg201. Asp270 serves as the catalytic Proton acceptor. Positions 271 and 280 each coordinate Mg(2+). Residue Asp280 participates in ATP binding.

This sequence belongs to the SELO family. Requires Mg(2+) as cofactor. Mn(2+) serves as cofactor.

It carries out the reaction L-seryl-[protein] + ATP = 3-O-(5'-adenylyl)-L-seryl-[protein] + diphosphate. The catalysed reaction is L-threonyl-[protein] + ATP = 3-O-(5'-adenylyl)-L-threonyl-[protein] + diphosphate. It catalyses the reaction L-tyrosyl-[protein] + ATP = O-(5'-adenylyl)-L-tyrosyl-[protein] + diphosphate. The enzyme catalyses L-histidyl-[protein] + UTP = N(tele)-(5'-uridylyl)-L-histidyl-[protein] + diphosphate. It carries out the reaction L-seryl-[protein] + UTP = O-(5'-uridylyl)-L-seryl-[protein] + diphosphate. The catalysed reaction is L-tyrosyl-[protein] + UTP = O-(5'-uridylyl)-L-tyrosyl-[protein] + diphosphate. Functionally, nucleotidyltransferase involved in the post-translational modification of proteins. It can catalyze the addition of adenosine monophosphate (AMP) or uridine monophosphate (UMP) to a protein, resulting in modifications known as AMPylation and UMPylation. The polypeptide is Protein nucleotidyltransferase YdiU (Paraburkholderia xenovorans (strain LB400)).